Reading from the N-terminus, the 469-residue chain is Acetyl-CoA decarbonylase/synthase complex subunit beta 2 (469 aa).

Residues Cys-187, Cys-190, Cys-276, and Cys-278 each contribute to the [Ni-Fe-S] cluster site.

This sequence belongs to the CdhC family. In terms of assembly, monomer. The ACDS complex is made up of alpha, epsilon, beta, gamma and delta chains with a probable stoichiometry of (alpha(2)epsilon(2))(4)-beta(8)-(gamma(1)delta(1))(8) (Potential). [Ni-Fe-S] cluster serves as cofactor.

It carries out the reaction Co(I)-[corrinoid Fe-S protein] + acetyl-CoA + H(+) = methyl-Co(III)-[corrinoid Fe-S protein] + CO + CoA. Functionally, part of a complex that catalyzes the reversible cleavage of acetyl-CoA, allowing autotrophic growth from CO(2). The alpha-epsilon complex generates CO from CO(2), while the beta subunit (this protein) combines the CO with CoA and a methyl group to form acetyl-CoA. The methyl group, which is incorporated into acetyl-CoA, is transferred to the beta subunit by a corrinoid iron-sulfur protein (the gamma-delta complex). This Methanocaldococcus jannaschii (strain ATCC 43067 / DSM 2661 / JAL-1 / JCM 10045 / NBRC 100440) (Methanococcus jannaschii) protein is Acetyl-CoA decarbonylase/synthase complex subunit beta 2 (cdhC2).